A 303-amino-acid polypeptide reads, in one-letter code: L(+)-tartrate dehydratase subunit alpha (303 aa).

The iron-sulfur cluster site is built by Cys71, Cys190, and Cys277.

The protein belongs to the class-I fumarase family. As to quaternary structure, tetramer of two alpha and two beta subunits. Iron-sulfur cluster serves as cofactor.

The catalysed reaction is (2R,3R)-tartrate = oxaloacetate + H2O. The chain is L(+)-tartrate dehydratase subunit alpha (ttdA) from Escherichia coli O6:K15:H31 (strain 536 / UPEC).